A 276-amino-acid chain; its full sequence is Putative olfactory receptor 10J6 (276 aa).

Over 1–25 the chain is Extracellular; it reads MRRKNLTEVTEFVFLGFSRFHKHHI. N-linked (GlcNAc...) asparagine glycosylation occurs at Asn-5. Residues 26–46 form a helical membrane-spanning segment; that stretch reads TLFVVFLILYTLTVAGNAIIM. At 47–54 the chain is on the cytoplasmic side; sequence TIICIDRH. Residues 55–75 form a helical membrane-spanning segment; the sequence is LHTPMYFFLSMLASSKTVYTL. The Extracellular portion of the chain corresponds to 76-99; that stretch reads FIIPQMLSSFVTQTQPISLAGCTT. Cys-97 and Cys-188 are disulfide-bonded. Residues 100 to 120 traverse the membrane as a helical segment; sequence QTFFFVTLAINNCFLLTVMGY. The Cytoplasmic segment spans residues 121–139; that stretch reads DHYMAICNPLRYRVITSKK. The helical transmembrane segment at 140-160 threads the bilayer; sequence VCVQLVCGAFSIGLAMAAVQV. Residues 161 to 196 lie on the Extracellular side of the membrane; it reads TSIFTLPFCHTVVGHFFCDILPVMKLSCINTTINEI. N-linked (GlcNAc...) asparagine glycosylation occurs at Asn-190. Residues 197–216 form a helical membrane-spanning segment; it reads INFVVRLFVILVPMGLVFIS. Residues 217-236 lie on the Cytoplasmic side of the membrane; the sequence is YVLIISTVLKIASAEGWKKT. The helical transmembrane segment at 237–257 threads the bilayer; sequence FATCAFHLTVVIVHYGCASIA. At 258–270 the chain is on the extracellular side; that stretch reads YLMPKSENSIEQD. A helical transmembrane segment spans residues 271–276; the sequence is LLLSVT.

It belongs to the G-protein coupled receptor 1 family.

The protein resides in the cell membrane. Functionally, odorant receptor. In Homo sapiens (Human), this protein is Putative olfactory receptor 10J6 (OR10J6P).